We begin with the raw amino-acid sequence, 359 residues long: Peptide chain release factor 1 (359 aa).

Glutamine 233 carries the N5-methylglutamine modification.

Belongs to the prokaryotic/mitochondrial release factor family. Post-translationally, methylated by PrmC. Methylation increases the termination efficiency of RF1.

It is found in the cytoplasm. Its function is as follows. Peptide chain release factor 1 directs the termination of translation in response to the peptide chain termination codons UAG and UAA. This is Peptide chain release factor 1 from Clostridium acetobutylicum (strain ATCC 824 / DSM 792 / JCM 1419 / IAM 19013 / LMG 5710 / NBRC 13948 / NRRL B-527 / VKM B-1787 / 2291 / W).